We begin with the raw amino-acid sequence, 27 residues long: Caerulein precursor fragment R2 (27 aa).

As to expression, expressed by the skin glands.

It is found in the secreted. In terms of biological role, antimicrobial peptide. The chain is Caerulein precursor fragment R2 from Xenopus ruwenzoriensis (Uganda clawed frog).